Reading from the N-terminus, the 140-residue chain is MRGEKLTKKWRLIKLSRMHYSDFAVRFIEEMLEDNERLHDFSVKYGMEKGAEVKRNLHLKDFSDVAEFLSMITGVRVSEKEGGVVFDGCPSREMTEVRKTVICTGFLEGFFKVFGYDVEVNAACGEKCRVEVKKRTSSSR.

This is an uncharacterized protein from Archaeoglobus fulgidus (strain ATCC 49558 / DSM 4304 / JCM 9628 / NBRC 100126 / VC-16).